A 257-amino-acid polypeptide reads, in one-letter code: Large ribosomal subunit protein uL2 (257 aa).

Positions 207 to 231 (VEHPFGGGNHQHIGKPSTIRRDAPA) are disordered.

It belongs to the universal ribosomal protein uL2 family. Component of the large ribosomal subunit.

Its subcellular location is the cytoplasm. In terms of biological role, component of the large ribosomal subunit. The ribosome is a large ribonucleoprotein complex responsible for the synthesis of proteins in the cell. In Xenopus laevis (African clawed frog), this protein is Large ribosomal subunit protein uL2 (rpl8).